Here is a 401-residue protein sequence, read N- to C-terminus: Cysteine desulfurase CsdA (401 aa).

The residue at position 222 (lysine 222) is an N6-(pyridoxal phosphate)lysine. The active-site Cysteine persulfide intermediate is cysteine 358.

It belongs to the class-V pyridoxal-phosphate-dependent aminotransferase family. Csd subfamily. As to quaternary structure, homodimer. Forms a heterodimer with CsdE. Requires pyridoxal 5'-phosphate as cofactor.

It carries out the reaction (sulfur carrier)-H + L-cysteine = (sulfur carrier)-SH + L-alanine. The enzyme catalyses L-selenocysteine + AH2 = hydrogenselenide + L-alanine + A + H(+). The catalysed reaction is 3-sulfino-L-alanine + H2O = sulfite + L-alanine + H(+). Its activity is regulated as follows. Cysteine desulfurase activity is increased 2-fold in the presence of CsdE. In terms of biological role, catalyzes the removal of elemental sulfur and selenium atoms from L-cysteine, L-cystine, L-selenocysteine, and L-selenocystine to produce L-alanine, and transiently retains the released sulfur atom on a cysteine residue, in the form of a persulfide. Can also desulfinate L-cysteine sulfinate (3-sulfino-L-alanine), which is the best substrate of the enzyme. Functions as a selenium delivery protein in the pathway for the biosynthesis of selenophosphate. Seems to participate in Fe/S biogenesis by recruiting the SufBCD-SufE proteins. Transfers sulfur to CsdE that increases the cysteine desulfurase activity of CsdA. Can also transfer sulfur directly to TcdA/CsdL in vitro. Appears to support the function of TcdA in the generation of cyclic threonylcarbamoyladenosine at position 37 (ct(6)A37) in tRNAs that read codons beginning with adenine. This is Cysteine desulfurase CsdA (csdA) from Escherichia coli (strain K12).